Reading from the N-terminus, the 559-residue chain is MLCTAPLVSSAASAVLLAFAIPNEFWLAGSSVLGLGALVPLYVGFLLSPAKKHVACSYGLFVALVHACSSFWLKNFQGFALFTLGASTVGYFFYALPFGVAFACILRKQAPARACAFALVWTLWEWVKSTGILAYPWGTVPMTAHSLSHLIQIADITGVWGLSFLIPLANACVAESLHFFIKKRDSVPVFRLWLLTGCLYCLCSLYGAYRIATLGAPRTTLALAIVQQNADPWDTXSFEKNLTTAIHLTETALRTQTAPPLPTTPYRKEKTLTHASARAPVDMVVWSESSLRYPYEQYRHVYNALPAARPFSAFLRTLGAPLLVGTPLRLSGNSTKGGYANAVALLRPDGHVAQVYGKMQMVPFAEFIPWGHMTSVQRLAQMLAGFSESWTPGPGPRLFHVPCAAGGSVRFATPICYEDAFPSLCAALHTQGSELLINLTNDSWSKTASAEWQHYVVSLFRAIELRTTLVRSTNSGYTVVIGPEGKTRAAFPLFQATSAVLHVPVYPVVRTYYARMRDWVIVLCALIFFAEGVRMAVHTRRHSTTQAESSLQQIRGEHV.

6 consecutive transmembrane segments (helical) span residues 27–47, 53–73, 86–106, 114–134, 153–173, and 187–207; these read LAGS…GFLL, HVAC…SFWL, ASTV…ACIL, ACAF…GILA, IADI…NACV, and VPVF…SLYG. One can recognise a CN hydrolase domain in the interval 221 to 507; the sequence is LALAIVQQNA…SAVLHVPVYP (287 aa). Glutamate 288 serves as the catalytic Proton acceptor. Lysine 358 is an active-site residue. Cysteine 416 (nucleophile) is an active-site residue. The helical transmembrane segment at 519–539 threads the bilayer; the sequence is WVIVLCALIFFAEGVRMAVHT.

The protein belongs to the CN hydrolase family. Apolipoprotein N-acyltransferase subfamily.

It localises to the cell inner membrane. The catalysed reaction is N-terminal S-1,2-diacyl-sn-glyceryl-L-cysteinyl-[lipoprotein] + a glycerophospholipid = N-acyl-S-1,2-diacyl-sn-glyceryl-L-cysteinyl-[lipoprotein] + a 2-acyl-sn-glycero-3-phospholipid + H(+). It participates in protein modification; lipoprotein biosynthesis (N-acyl transfer). Catalyzes the phospholipid dependent N-acylation of the N-terminal cysteine of apolipoprotein, the last step in lipoprotein maturation. This Treponema pallidum (strain Nichols) protein is Apolipoprotein N-acyltransferase 2.